We begin with the raw amino-acid sequence, 258 residues long: Indole-3-glycerol phosphate synthase (258 aa).

It belongs to the TrpC family.

It catalyses the reaction 1-(2-carboxyphenylamino)-1-deoxy-D-ribulose 5-phosphate + H(+) = (1S,2R)-1-C-(indol-3-yl)glycerol 3-phosphate + CO2 + H2O. It functions in the pathway amino-acid biosynthesis; L-tryptophan biosynthesis; L-tryptophan from chorismate: step 4/5. This is Indole-3-glycerol phosphate synthase from Legionella pneumophila (strain Paris).